An 80-amino-acid chain; its full sequence is U19-lycotoxin-Ls1b (80 aa).

The signal sequence occupies residues 1 to 22 (MSPKVQALIFIVGLITLLAAHA). A propeptide spanning residues 23-34 (QEELSDNIESER) is cleaved from the precursor. 4 cysteine pairs are disulfide-bonded: Cys-36–Cys-50, Cys-43–Cys-55, Cys-49–Cys-66, and Cys-57–Cys-64.

The protein belongs to the neurotoxin 02 (plectoxin) family. 05 (U19-lycotoxin) subfamily. As to expression, expressed by the venom gland.

The protein localises to the secreted. In Lycosa singoriensis (Wolf spider), this protein is U19-lycotoxin-Ls1b.